Reading from the N-terminus, the 237-residue chain is Large ribosomal subunit protein uL1 (237 aa).

Belongs to the universal ribosomal protein uL1 family. As to quaternary structure, part of the 50S ribosomal subunit.

In terms of biological role, binds directly to 23S rRNA. The L1 stalk is quite mobile in the ribosome, and is involved in E site tRNA release. Functionally, protein L1 is also a translational repressor protein, it controls the translation of the L11 operon by binding to its mRNA. This Dehalococcoides mccartyi (strain ATCC BAA-2100 / JCM 16839 / KCTC 5957 / BAV1) protein is Large ribosomal subunit protein uL1.